Consider the following 211-residue polypeptide: Rho-related GTP-binding protein RhoF (211 aa).

Met-1 bears the N-acetylmethionine mark. 26-33 (GDGGCGKT) provides a ligand contact to GTP. An Effector region motif is present at residues 48–56 (YAPSVFEKY). GTP contacts are provided by residues 73–77 (DTAGQ) and 131–134 (CKTD). Cys-208 carries the post-translational modification Cysteine methyl ester. Cys-208 carries the S-geranylgeranyl cysteine lipid modification. A propeptide spans 209-211 (LLL) (removed in mature form).

This sequence belongs to the small GTPase superfamily. Rho family.

It localises to the cell membrane. It is found in the cytoplasm. The protein localises to the cytoskeleton. In terms of biological role, plasma membrane-associated small GTPase which cycles between an active GTP-bound and an inactive GDP-bound state. Causes the formation of thin, actin-rich surface projections called filopodia. Functions cooperatively with CDC42 and Rac to generate additional structures, increasing the diversity of actin-based morphology. This Mus musculus (Mouse) protein is Rho-related GTP-binding protein RhoF (Rhof).